A 236-amino-acid chain; its full sequence is Cancer/testis antigen 55 (236 aa).

A disordered region spans residues 57–84 (RSSADVETGDNPLKAEPNLPAAVEEQSP).

In terms of assembly, interacts with GABARAP; this interaction may be important for GABARAP protein stability. Interacts with LAMP2; this interaction may be important for LAMP2 protein stability. Expressed in spermatozoa (at protein level).

Its subcellular location is the cytoplasm. It localises to the cytoplasmic vesicle. The protein resides in the secretory vesicle. The protein localises to the acrosome. It is found in the cell projection. Its subcellular location is the cilium. It localises to the flagellum. In terms of biological role, plays a role in spermatogenesis, possibly acting in the regulation of the autophagy pathway. In Mus musculus (Mouse), this protein is Cancer/testis antigen 55 (Ct55).